Here is a 254-residue protein sequence, read N- to C-terminus: 5-oxoprolinase subunit A (254 aa).

The protein belongs to the LamB/PxpA family. As to quaternary structure, forms a complex composed of PxpA, PxpB and PxpC.

The enzyme catalyses 5-oxo-L-proline + ATP + 2 H2O = L-glutamate + ADP + phosphate + H(+). Its function is as follows. Catalyzes the cleavage of 5-oxoproline to form L-glutamate coupled to the hydrolysis of ATP to ADP and inorganic phosphate. This Burkholderia ambifaria (strain MC40-6) protein is 5-oxoprolinase subunit A.